Consider the following 146-residue polypeptide: Hemoglobin cathodic subunit beta (146 aa).

The Globin domain occupies 2 to 146 (EWSASERSTI…VVSALSKQYF (145 aa)). Residues histidine 63 and histidine 92 each coordinate heme b.

This sequence belongs to the globin family. Heterotetramer of two alpha chains and two beta chains. In terms of tissue distribution, red blood cells.

In terms of biological role, involved in oxygen transport from gills to the various peripheral tissues. The chain is Hemoglobin cathodic subunit beta (hbb2) from Anguilla anguilla (European freshwater eel).